The chain runs to 226 residues: Transmembrane emp24 domain-containing protein 5 (226 aa).

The signal sequence occupies residues 1–24 (MGDKTWLPFPVVLLAALLLPRAAG). Topologically, residues 25–193 (FTPSLDSDFT…IQESNFDRVN (169 aa)) are lumenal. The region spanning 42 to 123 (KECFYQPMPL…EKVIFFELIL (82 aa)) is the GOLD domain. Residues 194-214 (FWSMVNLVVMVVVSAIQVYML) traverse the membrane as a helical segment. Residues 215–226 (KSLFEDKRKSRT) lie on the Cytoplasmic side of the membrane. The short motif at 217 to 218 (LF) is the Mediates export from ER element.

Belongs to the EMP24/GP25L family. In terms of assembly, interacts with TMED9 and TMED10.

It is found in the endoplasmic reticulum membrane. The protein resides in the golgi apparatus. Its subcellular location is the cis-Golgi network membrane. It localises to the endoplasmic reticulum-Golgi intermediate compartment membrane. Functionally, potential role in vesicular protein trafficking, mainly in the early secretory pathway. Required for the maintenance of the Golgi apparatus; involved in protein exchange between Golgi stacks during assembly. Probably not required for COPI-vesicle-mediated retrograde transport. The sequence is that of Transmembrane emp24 domain-containing protein 5 (TMED5) from Bos taurus (Bovine).